Reading from the N-terminus, the 60-residue chain is DNA gyrase inhibitor YacG (60 aa).

Residues C3, C6, C18, and C22 each coordinate Zn(2+). The disordered stretch occupies residues 38-60 (PASSEDEEEPLDQEAETPVAPRH). Residues 41–52 (SEDEEEPLDQEA) are compositionally biased toward acidic residues.

It belongs to the DNA gyrase inhibitor YacG family. Interacts with GyrB. It depends on Zn(2+) as a cofactor.

Inhibits all the catalytic activities of DNA gyrase by preventing its interaction with DNA. Acts by binding directly to the C-terminal domain of GyrB, which probably disrupts DNA binding by the gyrase. This Ruegeria pomeroyi (strain ATCC 700808 / DSM 15171 / DSS-3) (Silicibacter pomeroyi) protein is DNA gyrase inhibitor YacG.